Reading from the N-terminus, the 144-residue chain is Large ribosomal subunit protein uL15 (144 aa).

A disordered region spans residues 1–57 (MKLNDLSPAPGSRREKHRPGRGIGSGLGKTGGRGHKGQTSRSGGSIAPGFEGGQQPL). Over residues 21 to 31 (RGIGSGLGKTG) the composition is skewed to gly residues.

This sequence belongs to the universal ribosomal protein uL15 family. As to quaternary structure, part of the 50S ribosomal subunit.

Functionally, binds to the 23S rRNA. The polypeptide is Large ribosomal subunit protein uL15 (Pseudomonas entomophila (strain L48)).